A 447-amino-acid chain; its full sequence is Transcription factor azf1 (447 aa).

Disordered stretches follow at residues 125 to 155 (HNGASQQPPGAQSSSNEEGAQGKSSSSNEVE) and 174 to 199 (QSPGVQSLPPLQQLTHGGSNGYPQSY). Residues 127-139 (GASQQPPGAQSSS) are compositionally biased toward low complexity. Residues 140–155 (NEEGAQGKSSSSNEVE) are compositionally biased toward polar residues. 4 C2H2-type zinc fingers span residues 225-249 (YACTLPQCGKSFAQKTHLDIHMRAH), 255-279 (FVCKEPSCGQRFSQLGNLKTHQRRH), 285-307 (FSCDICQKRFAQRGNVRAHKITH), and 313-338 (FTCLLDDCGKQFTQLGNLKSHQNKFH). The tract at residues 377-447 (NKGIKGRGKD…EPYFIERQAH (71 aa)) is disordered. Over residues 397–416 (PGSESRRRIEPLSSTDDKMR) the composition is skewed to basic and acidic residues. Polar residues predominate over residues 421–431 (GDTSMYNGGSS).

The protein localises to the nucleus. Functionally, transcription factor that acts as a positive regulator of ochratoxin A (OTA) biosynthesis via controlling the expression of antioxidant genes and oxidative phosphorylation genes. The sequence is that of Transcription factor azf1 from Aspergillus niger (strain ATCC MYA-4892 / CBS 513.88 / FGSC A1513).